Consider the following 114-residue polypeptide: DNA-directed RNA polymerases II, IV and V subunit 9B (114 aa).

Residues C7, C10, C29, C32, C76, C79, C103, and C108 each contribute to the Zn(2+) site. Residues 72 to 113 (KAVRCAKCQHGEAVFFQATARGEEGMTLFFVCCNPNCSHRWR) form a TFIIS-type zinc finger.

The protein belongs to the archaeal RpoM/eukaryotic RPA12/RPB9/RPC11 RNA polymerase family. In terms of assembly, component of the RNA polymerase II, IV and V complexes. Interacts with NRPD1.

The protein localises to the nucleus. The protein resides in the nucleolus. DNA-dependent RNA polymerase catalyzes the transcription of DNA into RNA using the four ribonucleoside triphosphates as substrates. Component of RNA polymerase II which synthesizes mRNA precursors and many functional non-coding RNAs. Pol II is the central component of the basal RNA polymerase II transcription machinery. It is composed of mobile elements that move relative to each other. Component of RNA polymerases IV and V which mediate short-interfering RNAs (siRNA) accumulation and subsequent RNA-directed DNA methylation-dependent (RdDM) transcriptional gene silencing (TGS) of endogenous repeated sequences, including transposable elements. Required for RNA silencing. The chain is DNA-directed RNA polymerases II, IV and V subunit 9B (NRPB9B) from Arabidopsis thaliana (Mouse-ear cress).